Here is a 212-residue protein sequence, read N- to C-terminus: MFILSKIADLVRIPPDQFHRDTISAITHQLNNKFANKIIPNVGLCITIYDLLTVEEGQLKPGDGSSYINVTFRAVVFKPFLGEIVTGWISKCTAEGIKVSLLGIFDDIFIPQNMLFEGCYYTPEESAWIWPMDEETKLYFDVNEKIRFRIEREVFVDVKPKSPKERELEERAQLENEIEGKNEETPQNEKPPAYALLGSCQTDGMGLVSWWE.

The residue at position 162 (Ser162) is a Phosphoserine. Basic and acidic residues predominate over residues Arg166 to Glu184. The disordered stretch occupies residues Arg166–Tyr194.

Belongs to the eukaryotic RPB7/RPC8 RNA polymerase subunit family. In terms of assembly, component of the RNA polymerase III (Pol III) complex consisting of 17 subunits. RPC25/RPC8 and RPC17/RPC9 form a Pol III subcomplex.

Its subcellular location is the nucleus. In terms of biological role, DNA-dependent RNA polymerase catalyzes the transcription of DNA into RNA using the four ribonucleoside triphosphates as substrates. Specific peripheric component of RNA polymerase III which synthesizes small RNAs, such as 5S rRNA and tRNA. The RPC25/RPC8-RPC17/RPC9 subcomplex may bind Pol III transcripts emerging from the adjacent exit pore during elongation. The sequence is that of DNA-directed RNA polymerase III subunit RPC8 (RPC25) from Saccharomyces cerevisiae (strain ATCC 204508 / S288c) (Baker's yeast).